The chain runs to 219 residues: 7-carboxy-7-deazaguanine synthase (219 aa).

Residues 12-14 (IQG) and R27 contribute to the substrate site. The Radical SAM core domain occupies 18 to 219 (YTGTPSIFIR…VQIHKYLKIR (202 aa)). [4Fe-4S] cluster contacts are provided by C31, C35, and C38. T40 is a binding site for Mg(2+). A substrate-binding site is contributed by T92. S-adenosyl-L-methionine contacts are provided by residues G94 and 136–138 (SPK).

It belongs to the radical SAM superfamily. 7-carboxy-7-deazaguanine synthase family. As to quaternary structure, homodimer. [4Fe-4S] cluster serves as cofactor. It depends on S-adenosyl-L-methionine as a cofactor. Mg(2+) is required as a cofactor.

The catalysed reaction is 6-carboxy-5,6,7,8-tetrahydropterin + H(+) = 7-carboxy-7-deazaguanine + NH4(+). It participates in purine metabolism; 7-cyano-7-deazaguanine biosynthesis. In terms of biological role, catalyzes the complex heterocyclic radical-mediated conversion of 6-carboxy-5,6,7,8-tetrahydropterin (CPH4) to 7-carboxy-7-deazaguanine (CDG), a step common to the biosynthetic pathways of all 7-deazapurine-containing compounds. This Buchnera aphidicola subsp. Schizaphis graminum (strain Sg) protein is 7-carboxy-7-deazaguanine synthase.